The primary structure comprises 515 residues: 3-[(3aS,4S,7aS)-7a-methyl-1,5-dioxo-octahydro-1H-inden-4-yl]propanoyl:CoA ligase (515 aa).

Residues 185–193, D398, R413, and K504 each bind ATP; that span reads TSGTTGRSK.

This sequence belongs to the ATP-dependent AMP-binding enzyme family.

It catalyses the reaction 3-[(3aS,4S,7aS)-7a-methyl-1,5-dioxo-octahydro-1H-inden-4-yl]propanoate + ATP + CoA = 3-[(3aS,4S,7aS)-7a-methyl-1,5-dioxo-octahydro-1H-inden-4-yl]propanoyl-CoA + AMP + diphosphate. Functionally, involved in the catabolism of the rings C and D of cholesterol. Catalyzes the ATP-dependent CoA thioesterification of 3aalpha-H-4alpha(3'-propanoate)-7abeta-methylhexahydro-1,5-indanedione (HIP). The sequence is that of 3-[(3aS,4S,7aS)-7a-methyl-1,5-dioxo-octahydro-1H-inden-4-yl]propanoyl:CoA ligase from Rhodococcus jostii (strain RHA1).